The chain runs to 466 residues: Glutamate--tRNA ligase (466 aa).

The short motif at 9–19 is the 'HIGH' region element; the sequence is PSPTGDLHVGS. Residues 237-241 carry the 'KMSKS' region motif; that stretch reads KLSKR. Lysine 240 lines the ATP pocket.

Belongs to the class-I aminoacyl-tRNA synthetase family. Glutamate--tRNA ligase type 1 subfamily. As to quaternary structure, monomer.

It localises to the cytoplasm. It carries out the reaction tRNA(Glu) + L-glutamate + ATP = L-glutamyl-tRNA(Glu) + AMP + diphosphate. In terms of biological role, catalyzes the attachment of glutamate to tRNA(Glu) in a two-step reaction: glutamate is first activated by ATP to form Glu-AMP and then transferred to the acceptor end of tRNA(Glu). The polypeptide is Glutamate--tRNA ligase (Baumannia cicadellinicola subsp. Homalodisca coagulata).